Here is a 317-residue protein sequence, read N- to C-terminus: Melanocyte-stimulating hormone receptor (317 aa).

Topologically, residues 1–37 (MPAQGSQRGLLGAVNFTPTATPHLRPAANQTGPQCLE) are extracellular. N-linked (GlcNAc...) asparagine glycosylation occurs at Asn29. The chain crosses the membrane as a helical span at residues 38-63 (VSVPDGLFLCLGLVSLVENTLVVAAI). Residues 64-72 (AKNRNLHSP) are Cytoplasmic-facing. The chain crosses the membrane as a helical span at residues 73–93 (MYCFICCLALSDLLVSVSNLL). Residues 94 to 118 (ETAVLLLLEVGALAAQATVVQQLGN) are Extracellular-facing. A helical transmembrane segment spans residues 119–140 (VIDVLICSSMVSSLCSLGAIAM). Topologically, residues 141–163 (DRYISIFYALRYHSIVTLARARR) are cytoplasmic. A helical transmembrane segment spans residues 164–183 (AIAAVWAASILSSTLFITYY). At 184 to 191 (DRTAALLC) the chain is on the extracellular side. A helical transmembrane segment spans residues 192–211 (LVVFFLAMLVLMALLYVHML). Residues 212-240 (IQACQHAQAIARLHKRQHPVQQGWGLKGA) are Cytoplasmic-facing. A helical transmembrane segment spans residues 241–266 (ATLTILLGVFFLCWGPFFLHLTLIAV). The Extracellular portion of the chain corresponds to 267-279 (CPQHPTCSCIFKN). The chain crosses the membrane as a helical span at residues 280-300 (FRLFLALIICNTIVDPLIYAF). Over 301–317 (RSQELRRTLKEVLLFSW) the chain is Cytoplasmic.

This sequence belongs to the G-protein coupled receptor 1 family. Interacts with MGRN1, but does not undergo MGRN1-mediated ubiquitination; this interaction competes with GNAS-binding and thus inhibits agonist-induced cAMP production. Interacts with OPN3; the interaction results in a decrease in MC1R-mediated cAMP signaling and ultimately a decrease in melanin production in melanocytes.

The protein localises to the cell membrane. In terms of biological role, receptor for MSH (alpha, beta and gamma) and ACTH. The activity of this receptor is mediated by G proteins which activate adenylate cyclase. Mediates melanogenesis, the production of eumelanin (black/brown) and phaeomelanin (red/yellow), via regulation of cAMP signaling in melanocytes. This Eulemur fulvus fulvus (Brown lemur) protein is Melanocyte-stimulating hormone receptor (MC1R).